We begin with the raw amino-acid sequence, 185 residues long: Orotate phosphoribosyltransferase (185 aa).

Residues arginine 102, lysine 103, lysine 106, histidine 108, and 128–136 (DDVITTGGS) each bind 5-phospho-alpha-D-ribose 1-diphosphate. Orotate is bound by residues threonine 132 and arginine 160.

Belongs to the purine/pyrimidine phosphoribosyltransferase family. PyrE subfamily. In terms of assembly, homodimer. The cofactor is Mg(2+).

The catalysed reaction is orotidine 5'-phosphate + diphosphate = orotate + 5-phospho-alpha-D-ribose 1-diphosphate. Its pathway is pyrimidine metabolism; UMP biosynthesis via de novo pathway; UMP from orotate: step 1/2. Its function is as follows. Catalyzes the transfer of a ribosyl phosphate group from 5-phosphoribose 1-diphosphate to orotate, leading to the formation of orotidine monophosphate (OMP). This Leptospira biflexa serovar Patoc (strain Patoc 1 / Ames) protein is Orotate phosphoribosyltransferase.